The primary structure comprises 366 residues: MSGGNEEDQLAQCQAYVQRHNIQQLVKEAIVVLCIHKPDNPVLFLKDHFEKLNEQRAQEGGNPDAADDDDIIVEPPKRSGGRRTGISAEPIKEDDTEYKKVVIPKDDATRRSLESAMRKNLLFAHLEEDEQKTMYDAMFPVEKSAGETIIEQGEEGDNFYVIDKGTVDVYVNHEYVLTINEGGSFGELALIYGTPRAATVIAKTDVKLWAIDRLTYRRILMGSVTKKRKMYDEFLSKVQILADLDQWERANVADALERCDFEPGTHVVEQGQPGDEFFIILEGEANVLQKRSDDAPFDVVGHLGMSDYFGEIALLLDRPRAATVVAKTHLKCIKLDRNRFERVMGPVREILKRDVSNYNSYVKLMT.

The segment at 1 to 121 (MSGGNEEDQL…SLESAMRKNL (121 aa)) is dimerization and phosphorylation. A disordered region spans residues 55-87 (QRAQEGGNPDAADDDDIIVEPPKRSGGRRTGIS). The short motif at 82 to 86 (RRTGI) is the Pseudophosphorylation motif element. The residue at position 87 (Ser-87) is a Phosphoserine. 3',5'-cyclic AMP is bound by residues 122–239 (LFAH…SKVQ), Glu-187, Arg-196, 240–366 (ILAD…KLMT), Glu-311, and Arg-320.

Belongs to the cAMP-dependent kinase regulatory chain family. In terms of assembly, tetramer, composed of 2 regulatory (R) and 2 catalytic (C) subunits. In the presence of cAMP it dissociates into 2 active monomeric C subunits and an R dimer that binds four cAMP molecules. The pseudophosphorylation site binds to the substrate-binding region of the catalytic chain but is not phosphorylated. The physiological significance of phosphorylations by other kinases is unclear.

It localises to the cytoplasm. The protein resides in the cytosol. In terms of biological role, controls the rhythmic contraction of enteric muscles probably by regulating G-protein coupled receptor aex-2-mediated calcium influx in GABAergic DVB neurons. The polypeptide is cAMP-dependent protein kinase regulatory subunit (kin-2) (Caenorhabditis elegans).